Consider the following 351-residue polypeptide: Modulator of apoptosis 1 (351 aa).

The short motif at tyrosine 49–leucine 52 is the LIR element. The tract at residues leucine 120 to glutamate 127 is BH3-like. An RASSF1-binding region spans residues lysine 202–arginine 205.

Belongs to the PNMA family. As to quaternary structure, homodimer. Under normal circumstances, held in an inactive conformation by an intramolecular interaction. Interacts with BAX. Binding to RASSF1 isoform A (RASSF1A) relieves this inhibitory interaction and allows further binding to BAX. Also binds to BCL2 and BCLX. Recruited to the TNFRSF1A and TNFRSF10A complexes in response to their respective cognate ligand, after internalization. Interacts with TRIM39. Interacts with RASSF6. Interacts with ATG8 proteins MAP1LC3A, MAP1LC3B and MAP1LC3C. Does not interact with ATG8 proteins GABARAPL1, GABARAPL2 and GABARAP. Interacts with SQSTM1; promoting dissociation of SQSTM1 inclusion bodies that sequester KEAP1. In terms of processing, ubiquitinated and degraded during mitotic exit by APC/C-Cdh1, this modification is inhibited by TRIM39.

Its subcellular location is the cytoplasm. The protein localises to the cytosol. It localises to the mitochondrion outer membrane. It is found in the extracellular vesicle membrane. Functionally, retrotransposon-derived protein that forms virion-like capsids. Acts as an effector of BAX during apoptosis: enriched at outer mitochondria membrane and associates with BAX upon induction of apoptosis, facilitating BAX-dependent mitochondrial outer membrane permeabilization and apoptosis. Required for death receptor-dependent apoptosis. When associated with RASSF1, promotes BAX conformational change and translocation to mitochondrial membranes in response to TNF and TNFSF10 stimulation. Also promotes autophagy: promotes phagophore closure via association with ATG8 proteins. Acts as an inhibitor of the NFE2L2/NRF2 pathway via interaction with SQSTM1: interaction promotes dissociation of SQSTM1 inclusion bodies that sequester KEAP1, relieving inactivation of the BCR(KEAP1) complex. The chain is Modulator of apoptosis 1 from Macaca fascicularis (Crab-eating macaque).